We begin with the raw amino-acid sequence, 581 residues long: Kelch-like protein 38 (581 aa).

The BTB domain occupies Thr34–Thr101. Residues Cys136–Ala237 enclose the BACK domain. Kelch repeat units follow at residues Phe285–Arg332, Ile334–Asn383, Phe384–Gln431, Leu433–Glu479, Arg480–Asn521, and Leu523–Cys573.

The chain is Kelch-like protein 38 (KLHL38) from Homo sapiens (Human).